We begin with the raw amino-acid sequence, 169 residues long: Small ribosomal subunit protein uS5 (169 aa).

Residues 14–77 (MKEQVVDIRR…QAAKKNLLLV (64 aa)) enclose the S5 DRBM domain.

The protein belongs to the universal ribosomal protein uS5 family. In terms of assembly, part of the 30S ribosomal subunit. Contacts proteins S4 and S8.

Its function is as follows. With S4 and S12 plays an important role in translational accuracy. Located at the back of the 30S subunit body where it stabilizes the conformation of the head with respect to the body. The sequence is that of Small ribosomal subunit protein uS5 from Alkaliphilus metalliredigens (strain QYMF).